The primary structure comprises 411 residues: Glycogen synthase kinase-3 homolog MsK-3 (411 aa).

Residues 74 to 358 (YMAERVVGHG…ALEALVHPFY (285 aa)) form the Protein kinase domain. Residues 80–88 (VGHGSFGVV) and K103 contribute to the ATP site. Catalysis depends on D199, which acts as the Proton acceptor. Phosphotyrosine is present on Y234.

The protein belongs to the protein kinase superfamily. CMGC Ser/Thr protein kinase family. GSK-3 subfamily. In terms of tissue distribution, absent in leaves and petioles, very low levels are seen in the stems and roots while a moderate expression is seen in the nodes.

The catalysed reaction is L-seryl-[protein] + ATP = O-phospho-L-seryl-[protein] + ADP + H(+). The enzyme catalyses L-threonyl-[protein] + ATP = O-phospho-L-threonyl-[protein] + ADP + H(+). This chain is Glycogen synthase kinase-3 homolog MsK-3 (MSK-3), found in Medicago sativa (Alfalfa).